Reading from the N-terminus, the 571-residue chain is Septation ring formation regulator EzrA (571 aa).

Residues 1-3 (MYY) are Extracellular-facing. The helical transmembrane segment at 4–22 (MLIGFIIVVIAVIGAGYIL) threads the bilayer. Topologically, residues 23 to 571 (KRKHYQRINE…ESKVSVDDIE (549 aa)) are cytoplasmic. Coiled-coil stretches lie at residues 248-298 (LAQM…DTLE), 326-374 (DALA…ASGE), 400-437 (KFAEELRSLRKDELEARDDAERMRRAIITLDRKMERER), and 478-529 (RIAE…ENHF).

This sequence belongs to the EzrA family.

The protein localises to the cell membrane. Negative regulator of FtsZ ring formation; modulates the frequency and position of FtsZ ring formation. Inhibits FtsZ ring formation at polar sites. Interacts either with FtsZ or with one of its binding partners to promote depolymerization. In Listeria monocytogenes serotype 4b (strain CLIP80459), this protein is Septation ring formation regulator EzrA.